The primary structure comprises 341 residues: Phosphate acyltransferase (341 aa).

It belongs to the PlsX family. As to quaternary structure, homodimer. Probably interacts with PlsY.

It is found in the cytoplasm. The enzyme catalyses a fatty acyl-[ACP] + phosphate = an acyl phosphate + holo-[ACP]. It functions in the pathway lipid metabolism; phospholipid metabolism. Catalyzes the reversible formation of acyl-phosphate (acyl-PO(4)) from acyl-[acyl-carrier-protein] (acyl-ACP). This enzyme utilizes acyl-ACP as fatty acyl donor, but not acyl-CoA. The sequence is that of Phosphate acyltransferase from Pseudoalteromonas atlantica (strain T6c / ATCC BAA-1087).